We begin with the raw amino-acid sequence, 623 residues long: MTQRGEVPDFLHGCGLPAAWAGLPQWRILETGFGFGLNFLATWAAWRADPHRPVLLHFVATEAQPVSAADLLRAGSARPGLAPLAQELSRQWWGLLPGLHRLRFDDGHVLLTLCLGDWQAQLRQQRQQLTVDSVYLHDLPQDWRPQRHPAPAGLPGLPGLKAVAACCRRGTRLASRCSTVRDALVQCGFTLHPAPGSDAQRDMLHAVYQPHWQPRTMRPAAAPATPGECMVIGGGIAGAATAASLARRGWQLRVLDQAAAPAAGASGLPAGIFAPHVSADDNLLSRLSRSGVRSTLEQARWRLREGLDWSHCGVLEHRADASPGLPARWSDGPGADGRQSAAHAALGALAQSGLPANASVCWHPQAGWIRPARLVAALLAQPGIRWQGACRVARLRRVQAPGAGPTAWQALDAQGRVLAQAPTVVIAAGAGSLELLEHRWPLQPVRGQVSWGLHGDPAAPLLPFPVNGHGHLVPRFPLGDDAQGPCAWVMGATFERGVEQMPPAPADVQAAHASHWARLQTLLPRMAPPLESAFAAARADAGLAASARAAQSWAAVRCTAPDRLPIVGPVDAAALPGLWVCSAMGARGLTLALLCGELLAARLQGEPLPIEHRLAKALDSGRM.

Positions 1–209 are tRNA (mnm(5)s(2)U34)-methyltransferase; sequence MTQRGEVPDF…QRDMLHAVYQ (209 aa). The interval 232 to 623 is FAD-dependent cmnm(5)s(2)U34 oxidoreductase; it reads IGGGIAGAAT…LAKALDSGRM (392 aa).

This sequence in the N-terminal section; belongs to the methyltransferase superfamily. tRNA (mnm(5)s(2)U34)-methyltransferase family. It in the C-terminal section; belongs to the DAO family. FAD is required as a cofactor.

It is found in the cytoplasm. It catalyses the reaction 5-aminomethyl-2-thiouridine(34) in tRNA + S-adenosyl-L-methionine = 5-methylaminomethyl-2-thiouridine(34) in tRNA + S-adenosyl-L-homocysteine + H(+). In terms of biological role, catalyzes the last two steps in the biosynthesis of 5-methylaminomethyl-2-thiouridine (mnm(5)s(2)U) at the wobble position (U34) in tRNA. Catalyzes the FAD-dependent demodification of cmnm(5)s(2)U34 to nm(5)s(2)U34, followed by the transfer of a methyl group from S-adenosyl-L-methionine to nm(5)s(2)U34, to form mnm(5)s(2)U34. The polypeptide is tRNA 5-methylaminomethyl-2-thiouridine biosynthesis bifunctional protein MnmC (mnmC) (Verminephrobacter eiseniae (strain EF01-2)).